The sequence spans 502 residues: Sulfate adenylyltransferase (502 aa).

Positions 1–167 (MPSPHGGVLQ…LEAIQLPVHY (167 aa)) are N-terminal. A catalytic region spans residues 168 to 393 (DYPGWRKTPA…LRESNPSRPK (226 aa)). Gln195 provides a ligand contact to sulfate. Residues 195–198 (QTRN) and 289–292 (GRDH) each bind ATP. Active-site residues include Thr196, Arg197, and Asn198. A sulfate-binding site is contributed by Arg197. Position 293 (Ala293) interacts with sulfate. Val331 contributes to the ATP binding site. The segment at 394–502 (QGFALVLSET…FLEDQGFFQF (109 aa)) is required for oligomerization; adenylyl-sulfate kinase-like.

It belongs to the sulfate adenylyltransferase family. In terms of assembly, homohexamer. Dimer of trimers.

Its subcellular location is the cytoplasm. It carries out the reaction sulfate + ATP + H(+) = adenosine 5'-phosphosulfate + diphosphate. It functions in the pathway sulfur metabolism; hydrogen sulfide biosynthesis; sulfite from sulfate: step 1/3. Catalyzes the first intracellular reaction of sulfate assimilation, forming adenosine-5'-phosphosulfate (APS) from inorganic sulfate and ATP. Plays an important role in sulfate activation as a component of the biosynthesis pathway of sulfur-containing amino acids. The polypeptide is Sulfate adenylyltransferase (Kluyveromyces lactis (strain ATCC 8585 / CBS 2359 / DSM 70799 / NBRC 1267 / NRRL Y-1140 / WM37) (Yeast)).